The primary structure comprises 162 residues: Proepiregulin (162 aa).

The signal sequence occupies residues 1-22; sequence METLPASWVLTLLCLGSHLLQA. Positions 23–55 are excised as a propeptide; the sequence is VISTTVIPSCIPGESEDNCTALVQMEDDPRVAQ. N40 is a glycosylation site (N-linked (GlcNAc...) asparagine). Over 53–112 the chain is Extracellular; sequence VAQVQITKCSSDMDGYCLHGQCIYLVDMREKFCRCEVGYTGLRCEHFFLTVHQPLSKEYV. Residues 57–97 enclose the EGF-like domain; that stretch reads QITKCSSDMDGYCLHGQCIYLVDMREKFCRCEVGYTGLRCE. Intrachain disulfides connect C61-C74, C69-C85, and C87-C96. The propeptide at 102–162 is removed in mature form; it reads TVHQPLSKEY…TSGDPVLPQV (61 aa). A helical transmembrane segment spans residues 113–133; the sequence is ALTVILIFLFLIITAGCIYYF. The Cytoplasmic segment spans residues 134–162; sequence CRWYKNRKSKKSREEYERVTSGDPVLPQV.

In terms of assembly, interacts with EGFR and ERBB4.

Its subcellular location is the secreted. It is found in the extracellular space. The protein resides in the cell membrane. Its function is as follows. Ligand of the EGF receptor/EGFR and ERBB4. Stimulates EGFR and ERBB4 tyrosine phosphorylation. Contributes to inflammation, wound healing, tissue repair, and oocyte maturation by regulating angiogenesis and vascular remodeling and by stimulating cell proliferation. This is Proepiregulin (Ereg) from Mus musculus (Mouse).